Consider the following 180-residue polypeptide: Signal peptidase complex subunit 2 (180 aa).

The Cytoplasmic segment spans residues 1-45; sequence MSDERITVVNKWDGPTVKNGLDEVVKKILNDKVGWTEQHNLMNLR. A helical membrane pass occupies residues 46–66; sequence LLISFIGVAFSAFACGYDFYA. The Lumenal portion of the chain corresponds to 67–72; it reads PFPKSK. A helical transmembrane segment spans residues 73 to 93; sequence IVLLVCSVSYFICMGVLQLFQ. Topologically, residues 94 to 180 are cytoplasmic; it reads WYVEKDCFYE…LWARLIRSEQ (87 aa).

The protein belongs to the SPCS2 family. In terms of assembly, component of the signal peptidase complex (SPC) composed of a catalytic subunit sec-11 and three accessory subunits spcs-1, spcs-2 and spcs-3. The complex induces a local thinning of the ER membrane which is used to measure the length of the signal peptide (SP) h-region of protein substrates. This ensures the selectivity of the complex towards h-regions shorter than 18-20 amino acids.

It is found in the endoplasmic reticulum membrane. In terms of biological role, component of the signal peptidase complex (SPC) which catalyzes the cleavage of N-terminal signal sequences from nascent proteins as they are translocated into the lumen of the endoplasmic reticulum. Enhances the enzymatic activity of SPC and facilitates the interactions between different components of the translocation site. The chain is Signal peptidase complex subunit 2 from Caenorhabditis briggsae.